The primary structure comprises 477 residues: MAASALRGLAVAGGGESSESEDDGWEIGYLDRTSQKLKGQMLPIEEKKEKFKKALTTGDVSLVLELLDSGIISVDATFRYGWTPLMYAASVANAELVRVLLDRGANASFEKDKQTILITACSAHGSEEQILKCVELLLSRNADPNVACRRLMTPIMYAARDGHTQVVALLVASGAEVNTQDENGYTALTWAARQGHKSIVLKLLELGANKMLQTKDGKLPSEIAKRNKHHEIFNLLTFTLNPLEGKLQQLTKEETICKILTTDSDRENDHIFSSYAAFGDLEVFLHGLGLEHMTDLLKERDITLRQLLTMREDEFTKNGFTSKDQQKILAALKELEVEEIPFGELSEEAKLEISGDEFLNFLLKLNKQCGHLITAVQNIITELPVNSQKIALEWASPQNFTSVCEELVNNVEDLSEEVCNLKDLIQKLQNERENDPTHIPLREEVSTWNSRILKRTAITVCGFGFLFFICKITFQRK.

Serine 17, serine 18, and serine 20 each carry phosphoserine. 6 ANK repeats span residues 46-76 (EKKEKFKKALTTGDVSLVLELLDSGIISVDA), 80-109 (YGWTPLMYAASVANAELVRVLLDRGANASF), 112-146 (DKQTILITACSAHGSEEQILKCVELLLSRNADPNV), 150-179 (RLMTPIMYAARDGHTQVVALLVASGAEVNT), 183-212 (NGYTALTWAARQGHKSIVLKLLELGANKML), and 216-245 (DGKLPSEIAKRNKHHEIFNLLTFTLNPLEG). One can recognise an SAM domain in the interval 274–336 (SYAAFGDLEV…KILAALKELE (63 aa)).

Interacts with DDX4, PIWIL1, RANBP9 and TDRD1.

It localises to the cytoplasm. Plays a central role during spermatogenesis by repressing transposable elements and preventing their mobilization, which is essential for the germline integrity. Acts via the piRNA metabolic process, which mediates the repression of transposable elements during meiosis by forming complexes composed of piRNAs and Piwi proteins and governs the methylation and subsequent repression of transposons. Its association with pi-bodies suggests a participation in the primary piRNAs metabolic process. Required prior to the pachytene stage to facilitate the production of multiple types of piRNAs, including those associated with repeats involved in the regulation of retrotransposons. May act by mediating protein-protein interactions during germ cell maturation. This chain is Ankyrin repeat, SAM and basic leucine zipper domain-containing protein 1 (ASZ1), found in Callithrix jacchus (White-tufted-ear marmoset).